Here is a 283-residue protein sequence, read N- to C-terminus: Pantothenate synthetase (283 aa).

30 to 37 (MGYLHEGH) contributes to the ATP binding site. Residue H37 is the Proton donor of the active site. A (R)-pantoate-binding site is contributed by Q61. Q61 lines the beta-alanine pocket. 147–150 (GQKD) provides a ligand contact to ATP. (R)-pantoate is bound at residue Q153. ATP contacts are provided by residues V176 and 184-187 (MSSR).

It belongs to the pantothenate synthetase family. Homodimer.

It localises to the cytoplasm. The catalysed reaction is (R)-pantoate + beta-alanine + ATP = (R)-pantothenate + AMP + diphosphate + H(+). It functions in the pathway cofactor biosynthesis; (R)-pantothenate biosynthesis; (R)-pantothenate from (R)-pantoate and beta-alanine: step 1/1. Catalyzes the condensation of pantoate with beta-alanine in an ATP-dependent reaction via a pantoyl-adenylate intermediate. The polypeptide is Pantothenate synthetase (Thermoanaerobacter pseudethanolicus (strain ATCC 33223 / 39E) (Clostridium thermohydrosulfuricum)).